The primary structure comprises 278 residues: Acetyl-coenzyme A carboxylase carboxyl transferase subunit beta (278 aa).

A CoA carboxyltransferase N-terminal domain is found at 23–278 (LWSKCDSCGA…QLIKLLGHMK (256 aa)). Zn(2+) is bound by residues Cys27, Cys30, Cys46, and Cys49. A C4-type zinc finger spans residues 27–49 (CDSCGAALHKKQLEDHLYTCPHC).

It belongs to the AccD/PCCB family. As to quaternary structure, acetyl-CoA carboxylase is a heterohexamer composed of biotin carboxyl carrier protein (AccB), biotin carboxylase (AccC) and two subunits each of ACCase subunit alpha (AccA) and ACCase subunit beta (AccD). It depends on Zn(2+) as a cofactor.

It is found in the cytoplasm. The catalysed reaction is N(6)-carboxybiotinyl-L-lysyl-[protein] + acetyl-CoA = N(6)-biotinyl-L-lysyl-[protein] + malonyl-CoA. The protein operates within lipid metabolism; malonyl-CoA biosynthesis; malonyl-CoA from acetyl-CoA: step 1/1. In terms of biological role, component of the acetyl coenzyme A carboxylase (ACC) complex. Biotin carboxylase (BC) catalyzes the carboxylation of biotin on its carrier protein (BCCP) and then the CO(2) group is transferred by the transcarboxylase to acetyl-CoA to form malonyl-CoA. The protein is Acetyl-coenzyme A carboxylase carboxyl transferase subunit beta of Chlorobaculum tepidum (strain ATCC 49652 / DSM 12025 / NBRC 103806 / TLS) (Chlorobium tepidum).